The primary structure comprises 692 residues: Potassium-transporting ATPase ATP-binding subunit (692 aa).

Transmembrane regions (helical) follow at residues 50 to 70 (PIMF…FLPS), 77 to 97 (GWFN…ANFA), 240 to 260 (LTLI…YLGF), and 266 to 286 (VLVA…LSAI). The active-site 4-aspartylphosphate intermediate is aspartate 319. ATP-binding positions include aspartate 356, glutamate 360, 388-395 (FKAETRMS), and lysine 407. 2 residues coordinate Mg(2+): aspartate 530 and aspartate 534. A run of 3 helical transmembrane segments spans residues 600-620 (FAII…LNIM), 628-648 (AILS…PLAM), and 672-692 (GGVI…GLFI).

The protein belongs to the cation transport ATPase (P-type) (TC 3.A.3) family. Type IA subfamily. As to quaternary structure, the system is composed of three essential subunits: KdpA, KdpB and KdpC.

It is found in the cell membrane. The enzyme catalyses K(+)(out) + ATP + H2O = K(+)(in) + ADP + phosphate + H(+). Part of the high-affinity ATP-driven potassium transport (or Kdp) system, which catalyzes the hydrolysis of ATP coupled with the electrogenic transport of potassium into the cytoplasm. This subunit is responsible for energy coupling to the transport system and for the release of the potassium ions to the cytoplasm. The protein is Potassium-transporting ATPase ATP-binding subunit of Bacillus cereus (strain 03BB102).